A 391-amino-acid polypeptide reads, in one-letter code: MKVKYLMLTLVGAIALNASAQENTVPATGQLPAKNVAFARNKAGSNWFVTLQGGVAAQFLNDNNNKDLMDRLGAIGSLSVGKYHSPFFATRLQINGGQAHTFLGKNGEQEINTNFGAAHFDFMFDVVNYFAPYRENRFFHLIPWVGVGYQHKFIGSEWSKDNVESLTANVGVMMAFRLGKRVDFVIEAQAAHSNLNLSRAYNAKKTPVFEDPAGRYYNGFQGMATAGLNFRLGAVGFNAIEPMDYALINDLNGQINRLRSEVEELSKRPVSCPECPEVTPVTKTENILTEKAVLFRFDSHVVDKDQLINLYDVAQFVKETNEPITVVGYADPTGNTQYNEKLSERRAKAVVDVLTGKYGVPSELISVEWKGDSTQPFSKKAWNRVVIVRSK.

Positions Met1–Ala20 are cleaved as a signal peptide. Pyrrolidone carboxylic acid is present on Gln21. The OmpA-like domain maps to Thr282–Lys391.

This sequence belongs to the outer membrane OOP (TC 1.B.6) superfamily. Disulfide-linked heterodimer with Omp40.

The protein resides in the cell outer membrane. Its function is as follows. May have porin activity and function in peptidoglycan binding. The protein is Outer membrane protein 41 of Porphyromonas gingivalis (strain ATCC BAA-308 / W83).